Here is a 615-residue protein sequence, read N- to C-terminus: Leucine aminopeptidase 2-1 (615 aa).

Substrate contacts are provided by residues 137-139 (QCQ) and 261-266 (PYGGME). A Zn(2+)-binding site is contributed by His-290. Glu-291 serves as the catalytic Proton acceptor. The Zn(2+) site is built by His-294 and Glu-313. The active-site Proton donor is the Tyr-380.

The protein belongs to the peptidase M1 family. It depends on Zn(2+) as a cofactor.

The protein localises to the cytoplasm. It localises to the nucleus. The enzyme catalyses an epoxide + H2O = an ethanediol. Aminopeptidase that preferentially cleaves di- and tripeptides. Also has low epoxide hydrolase activity (in vitro). Can hydrolyze the epoxide leukotriene LTA(4) but it forms preferentially 5,6-dihydroxy-7,9,11,14-eicosatetraenoic acid rather than the cytokine leukotriene B(4) as the product compared to the homologous mammalian enzyme (in vitro). This Meyerozyma guilliermondii (strain ATCC 6260 / CBS 566 / DSM 6381 / JCM 1539 / NBRC 10279 / NRRL Y-324) (Yeast) protein is Leucine aminopeptidase 2-1.